Here is a 457-residue protein sequence, read N- to C-terminus: Methylphosphonate synthase (457 aa).

The 52-residue stretch at 23 to 74 folds into the HTH cro/C1-type 1 domain; it reads ILNDIKRRPEDAANELGVSIEEINSIISGKQKISPSLIEKAVNIWPVNERDF. Residues 32-50 constitute a DNA-binding region (H-T-H motif); the sequence is EDAANELGVSIEEINSIIS. Residues His-148 and His-190 each coordinate Fe cation. The HTH cro/C1-type 2 domain occupies 247 to 301; it reads LEYYFELSNLTKEKFAKRTNFSMETLADFFTKKKLPTFDELKIIAKALNVNSRDL. Positions 258-277 form a DNA-binding region, H-T-H motif; it reads KEKFAKRTNFSMETLADFFT.

It belongs to the non-heme iron-dependent dioxygenase family. It depends on Fe(2+) as a cofactor.

The enzyme catalyses 2-hydroxyethylphosphonate + O2 = methylphosphonate + hydrogencarbonate + H(+). It participates in phosphorus metabolism; phosphonate biosynthesis. In terms of biological role, catalyzes the conversion of 2-hydroxyethylphosphonate into methylphosphonate in the methylphosphonate biosynthesis pathway. This Nitrosopumilus maritimus (strain SCM1) protein is Methylphosphonate synthase (mpnS).